Consider the following 1097-residue polypeptide: Putative regulator of nonsense transcripts 1 (1097 aa).

Residues 42 to 53 (SQTQTQGHTQSQ) show a composition bias toward low complexity. The segment at 42–67 (SQTQTQGHTQSQLDNQLNGPDDGLHN) is disordered. The 159-residue stretch at 96–254 (TKDLPVHACR…NKLEELWKDN (159 aa)) folds into the Upf1 CH-rich domain. Positions 104, 108, 119, 122, 127, 137, 141, 147, 165, 168, 191, and 195 each coordinate Zn(2+). Residues 104-137 (CRSYCGIHDPACVVYCNTSKKWFCNGRGNTSGSH) form a C3H region. Positions 119–147 (CNTSKKWFCNGRGNTSGSHIVNHLVRAKC) are CC/SHH/C. Positions 165 to 195 (CYNCGCRNVFLLGFIPAKADSVVVLLCRQPC) are C4. ATP-binding positions include Gln-457, 474-481 (GPPGTGKT), Tyr-683, and Glu-813. A disordered region spans residues 977 to 998 (QGQTNGPAAGRGAMKGKSGRGG).

The protein belongs to the DNA2/NAM7 helicase family.

It is found in the cytoplasm. The protein resides in the P-body. The enzyme catalyses ATP + H2O = ADP + phosphate + H(+). In terms of biological role, RNA-dependent helicase required for nonsense-mediated decay (NMD) of aberrant mRNAs containing premature stop codons and modulates the expression level of normal mRNAs. The formation of an rent1-rent2-rent3 surveillance complex is believed to activate NMD. The sequence is that of Putative regulator of nonsense transcripts 1 (rent1) from Takifugu rubripes (Japanese pufferfish).